The primary structure comprises 162 residues: RNA pyrophosphohydrolase (162 aa).

The Nudix hydrolase domain maps to 11-155 (PYRPCVGIVL…KRAVYEEVVA (145 aa)). The Nudix box motif lies at 45–66 (GGIDEGEKPREAALRELWEETG).

It belongs to the Nudix hydrolase family. RppH subfamily. It depends on a divalent metal cation as a cofactor.

Its function is as follows. Accelerates the degradation of transcripts by removing pyrophosphate from the 5'-end of triphosphorylated RNA, leading to a more labile monophosphorylated state that can stimulate subsequent ribonuclease cleavage. The chain is RNA pyrophosphohydrolase from Cereibacter sphaeroides (strain ATCC 17029 / ATH 2.4.9) (Rhodobacter sphaeroides).